A 554-amino-acid polypeptide reads, in one-letter code: Pigment biosynthesis transcriptional activator pigB (554 aa).

The segment at 1–21 is disordered; it reads MFTSSSPEQRKPRQSRQLPGA. Positions 23–40 form a DNA-binding region, zn(2)-C6 fungal-type; that stretch reads CEECRRKKLRCDRQQPQC.

It localises to the nucleus. Its function is as follows. Transcription factor; part of the gene cluster that mediates the biosynthesis of azaphilone pigments (MonAzPs), a complex mixture of compounds with a common azaphilone skeleton very widely used as food colorants. Positively regulates the expression of the azaphilone pigments (MonAzPs) gene cluster. This is Pigment biosynthesis transcriptional activator pigB from Monascus ruber (Mold).